The sequence spans 325 residues: Dimethylsulfide dehydrogenase subunit beta (325 aa).

4Fe-4S ferredoxin-type domains lie at 6–35 (ISMVLDLNKCIGCQTCTSACKLQWTNRNGR), 123–154 (SYYFYLPRICNHCANPGCLAACARNAIYKRQE), and 156–185 (GIVLVDQERCRGYRYCITACPYKKVYFNEQ). 7 residues coordinate [4Fe-4S] cluster: Cys15, Cys18, Cys21, Cys25, Cys132, Cys135, and Cys140. [3Fe-4S] cluster is bound by residues Cys144, Cys165, and Cys171. Residues Cys175, Cys192, Cys195, Cys207, and Cys211 each contribute to the [4Fe-4S] cluster site.

Heterotrimer of alpha, beta and gamma subunits. [3Fe-4S] cluster serves as cofactor. Requires [4Fe-4S] cluster as cofactor.

The protein localises to the periplasm. Functionally, electron transfer subunit of the dehydrogenase during anaerobic growth on dimethyl sulfide. The sequence is that of Dimethylsulfide dehydrogenase subunit beta (ddhB) from Rhodovulum sulfidophilum (Rhodobacter sulfidophilus).